The sequence spans 177 residues: Bifunctional protein PyrR (177 aa).

Residues 98-110 carry the PRPP-binding motif; sequence IILVDDVIYTGRT.

Belongs to the purine/pyrimidine phosphoribosyltransferase family. PyrR subfamily. Homodimer and homohexamer; in equilibrium.

The enzyme catalyses UMP + diphosphate = 5-phospho-alpha-D-ribose 1-diphosphate + uracil. In terms of biological role, regulates transcriptional attenuation of the pyrimidine nucleotide (pyr) operon by binding in a uridine-dependent manner to specific sites on pyr mRNA. This disrupts an antiterminator hairpin in the RNA and favors formation of a downstream transcription terminator, leading to a reduced expression of downstream genes. Also displays a weak uracil phosphoribosyltransferase activity which is not physiologically significant. The protein is Bifunctional protein PyrR of Clostridium kluyveri (strain ATCC 8527 / DSM 555 / NBRC 12016 / NCIMB 10680 / K1).